Here is a 1663-residue protein sequence, read N- to C-terminus: Complement C3 (1663 aa).

Positions 1 to 24 (MGPASGSQLLVLLLLLASSPLALG) are cleaved as a signal peptide. Residue Ser40 is modified to Phosphoserine. Intrachain disulfides connect Cys559/Cys816, Cys626/Cys661, Cys693/Cys720, Cys694/Cys727, Cys707/Cys728, Cys873/Cys1513, Cys1101/Cys1158, Cys1358/Cys1489, Cys1389/Cys1458, Cys1506/Cys1511, Cys1518/Cys1590, Cys1537/Cys1661, and Cys1637/Cys1646. Phosphoserine is present on Ser671. The 36-residue stretch at 693-728 (CCEDGMRDIPMRYSCQRRARLITQGENCIKAFIDCC) folds into the Anaphylatoxin-like domain. The N-linked (GlcNAc...) asparagine glycan is linked to Asn939. A Phosphoserine modification is found at Ser968. The segment at residues 1010–1013 (CGEQ) is a cross-link (isoglutamyl cysteine thioester (Cys-Gln)). Ser1321 carries the phosphoserine modification. In terms of domain architecture, NTR spans 1518 to 1661 (CFMQQSQEKI…FTESMVVYGC (144 aa)). The residue at position 1573 (Ser1573) is a Phosphoserine. N-linked (GlcNAc...) asparagine glycosylation occurs at Asn1617. The segment at 1634–1659 (AEECQDQKYQKQCEELGAFTESMVVY) is interaction with CFP/properdin.

As to quaternary structure, in absence of complement activation, the C3 precursor is first processed by the removal of 4 Arg residues, forming two chains, beta and alpha, linked by a disulfide bond. Complement C3b is composed of complement C3b and complement C3 beta chains that are associated via disulfide bonds. Non-enzymatic component of the C5 convertase, also named C4bC2bC3b, composed of the serine protease complement C2b (C2), complement C3b, as well as complement C4b (C4). Non-enzymatic component of the C5 convertase of the alternative complement pathways composed of the serine protease complement CFB and complement C3b. Interacts with CFP; interaction takes place together with CFB in the alternative complement system and allows the complex to become active. Interacts with CR1 (via Sushi 8 and Sushi 9 domains). Interacts with CFH. In terms of assembly, interacts with CFH. Interacts with CR2. As to quaternary structure, during pregnancy, C3dg exists as a complex (probably a 2:2:2 heterohexamer) with AGT and the proform of PRG2. Interacts with CR2 (via the N-terminal Sushi domains 1 and 2). C3 precursor is first processed by the removal of 4 Arg residues, forming two chains, beta and alpha, linked by a disulfide bond. During activation of the complement systems, the alpha chain is cleaved into C3a and C3b by the C3 convertase: C3b stays linked to the beta chain, while C3a is released in the plasma. The alpha chain is cleaved by the serine protease complement C2b component of the C3 convertase to generate C3a and C3b following activation by the classical, lectin and GZMK complement systems. The alpha chain is cleaved by CFB component of the C3 convertase to generate C3a and C3b following activation by the alternative complement system. In terms of processing, C3a is further processed by carboxypeptidases to release the C-terminal arginine residue generating the acylation stimulating protein (ASP). Levels of ASP are increased in adipocytes in the postprandial period and by insulin and dietary chylomicrons. Post-translationally, complement C3b is rapidly split in two positions by factor I (CFI) and a cofactor (CFH) to form iC3b (inactivated C3b) and C3f which is released. CFI and CFH catalyze proteolytic degradation of already-deposited complement C3b. Then iC3b is slowly cleaved (possibly by CFI) to form C3c (beta chain + alpha' chain fragment 1 + alpha' chain fragment 2), C3dg and C3f. Other proteases produce other fragments such as C3d or C3g. Upon activation, the internal thioester bond reacts with carbohydrate antigens on the target surface to form amide or ester bonds, leading to covalent association with the surface of pathogens. In terms of processing, complement C3b interacts with complement C4b via a thioester linkage. Post-translationally, phosphorylated by FAM20C in the extracellular medium.

The protein resides in the secreted. Its subcellular location is the cell surface. Complement activation is inhibited by VSIG4. Its function is as follows. Precursor of non-enzymatic components of the classical, alternative, lectin and GZMK complement pathways, which consist in a cascade of proteins that leads to phagocytosis and breakdown of pathogens and signaling that strengthens the adaptive immune system. Functionally, non-enzymatic component of C5 convertase. Generated following cleavage by C3 convertase, it covalently attaches to the surface of pathogens, where it acts as an opsonin that marks the surface of antigens for removal. Complement C3b binds covalently via its reactive thioester, to cell surface carbohydrates or immune aggregates. Together with complement C4b, it then recruits the serine protease complement C2b to form the C5 convertase, which cleaves and activate C5, the next component of the complement pathways. In the alternative complement pathway, recruits the serine protease CFB to form the C5 convertase that cleaves and activates C5. Mediator of local inflammatory process released following cleavage by C3 convertase. Acts by binding to its receptor, C3AR1, activating G protein-coupled receptor signaling, promoting the phosphorylation, ARRB2-mediated internalization and endocytosis of C3AR1. C3a anaphylatoxin stimulates the activation of immune cells such as mast cells and basophilic leukocytes to release inflammation agents, such as cytokines, chemokines and histamine, which promote inflammation development. Also acts as potent chemoattractant for the migration of macrophages and neutrophils to the inflamed tissues, resulting in neutralization of the inflammatory triggers by multiple ways, such as phagocytosis and generation of reactive oxidants. In terms of biological role, adipogenic hormone that stimulates triglyceride synthesis and glucose transport in adipocytes, regulating fat storage and playing a role in postprandial triglyceride clearance. Appears to stimulate triglyceride synthesis via activation of the PLC, MAPK and AKT signaling pathways. Acts by binding to its receptor, C5AR2, activating G protein-coupled receptor signaling, promoting the phosphorylation, ARRB2-mediated internalization and endocytosis of C5AR2. Its function is as follows. Acts as a chemoattractant for neutrophils in chronic inflammation. The polypeptide is Complement C3 (Mus musculus (Mouse)).